Here is a 142-residue protein sequence, read N- to C-terminus: Hemoglobin subunit alpha (142 aa).

S1 is subject to N-acetylserine. The Globin domain maps to 1–142 (SLSEKNKAAV…VALALADRYR (142 aa)). H59 lines the O2 pocket. A heme b-binding site is contributed by H88.

Belongs to the globin family. In terms of assembly, heterotetramer of two alpha chains and two beta chains. As to expression, red blood cells.

Functionally, involved in oxygen transport from gills to the various peripheral tissues. This Pagothenia borchgrevinki (Bald rockcod) protein is Hemoglobin subunit alpha (hba).